We begin with the raw amino-acid sequence, 262 residues long: Tetratricopeptide repeat protein 33 (262 aa).

The tract at residues 17 to 63 (ATSQQFEAEAADEKDAAENEDGNWLQASKRRKETLQEGCKQRSQQLK) is disordered. TPR repeat units follow at residues 59–92 (SQQL…TPGD), 93–126 (ATLY…NPHS), and 127–160 (WEAW…YPMN). Position 197 is a phosphoserine (Ser-197).

The protein is Tetratricopeptide repeat protein 33 (Ttc33) of Mus musculus (Mouse).